We begin with the raw amino-acid sequence, 157 residues long: Protein Smg homolog (157 aa).

The protein belongs to the Smg family.

The polypeptide is Protein Smg homolog (Stenotrophomonas maltophilia (strain R551-3)).